A 362-amino-acid polypeptide reads, in one-letter code: H-2 class I histocompatibility antigen, D-K alpha chain (362 aa).

The N-terminal stretch at 1–24 is a signal peptide; sequence MGAMVPRTLLLLLAAALAPAQTRA. An alpha-1 region spans residues 25–114; the sequence is GPHSLRYFET…LLRYYNQSEG (90 aa). Topologically, residues 25 to 306 are extracellular; that stretch reads GPHSLRYFET…RWEPPPSTDS (282 aa). N-linked (GlcNAc...) asparagine glycosylation occurs at Asn-110. The segment at 115-206 is alpha-2; that stretch reads GSHTIQRLSG…ELGNATLLHT (92 aa). Cys-125 and Cys-188 are joined by a disulfide. 2 N-linked (GlcNAc...) asparagine glycosylation sites follow: Asn-200 and Asn-280. The alpha-3 stretch occupies residues 207–298; the sequence is DSPKAHVTHH…GLPEPLTLRW (92 aa). The 89-residue stretch at 209–297 folds into the Ig-like C1-type domain; sequence PKAHVTHHPR…EGLPEPLTLR (89 aa). Cys-227 and Cys-283 are disulfide-bonded. Residues 299-306 are connecting peptide; sequence EPPPSTDS. Residues 307-333 form a helical membrane-spanning segment; the sequence is YMVIVAVLGVLGAVAIIGAVVAFVMMM. Over 334-362 the chain is Cytoplasmic; that stretch reads RRNTGGKGGDYTLTPGSQSSEMSLPDCKA. The interval 340–362 is disordered; the sequence is KGGDYTLTPGSQSSEMSLPDCKA. Residues Ser-353 and Ser-356 each carry the phosphoserine modification.

This sequence belongs to the MHC class I family. Heterodimer of an alpha chain and a beta chain (beta-2-microglobulin). Polyubiquitinated in case of infection by murid herpesvirus 4, by the viral E3 ligase K3 (mK3), leading to target the protein for rapid degradation by the endoplasmic reticulum-associated degradation (ERAD) system. Ubiquitination takes place on lysine, as well as serine and threonine residues present in the cytoplasmic tail. Hydroxylated serine and threonine residues in the cytoplasmic tail are subject to ubiquitination via ester bonds instead of the classical isopeptide linkage. In terms of processing, hydroxylation of residues in the cytoplasmic tail.

The protein localises to the membrane. Its function is as follows. Involved in the presentation of foreign antigens to the immune system. This Mus musculus (Mouse) protein is H-2 class I histocompatibility antigen, D-K alpha chain (H2-D1).